The sequence spans 390 residues: GTPase Obg (390 aa).

One can recognise an Obg domain in the interval 1–159 (MKFVDEATIK…RELRLELLLL (159 aa)). The OBG-type G domain maps to 160–333 (ADVGMLGLPN…LCDELADFMD (174 aa)). GTP contacts are provided by residues 166 to 173 (GLPNAGKS), 191 to 195 (FTTLI), 213 to 216 (DIPG), 283 to 286 (NKTD), and 314 to 316 (AAV). Ser173 and Thr193 together coordinate Mg(2+).

It belongs to the TRAFAC class OBG-HflX-like GTPase superfamily. OBG GTPase family. As to quaternary structure, monomer. It depends on Mg(2+) as a cofactor.

Its subcellular location is the cytoplasm. In terms of biological role, an essential GTPase which binds GTP, GDP and possibly (p)ppGpp with moderate affinity, with high nucleotide exchange rates and a fairly low GTP hydrolysis rate. Plays a role in control of the cell cycle, stress response, ribosome biogenesis and in those bacteria that undergo differentiation, in morphogenesis control. The sequence is that of GTPase Obg from Aliivibrio fischeri (strain MJ11) (Vibrio fischeri).